The primary structure comprises 454 residues: Mediator of RNA polymerase II transcription subunit 1 (454 aa).

The protein belongs to the Mediator complex subunit 1 family. Component of the Mediator complex.

The protein resides in the nucleus. Its function is as follows. Component of the Mediator complex, a coactivator involved in the regulated transcription of nearly all RNA polymerase II-dependent genes. Mediator functions as a bridge to convey information from gene-specific regulatory proteins to the basal RNA polymerase II transcription machinery. Mediator is recruited to promoters by direct interactions with regulatory proteins and serves as a scaffold for the assembly of a functional preinitiation complex with RNA polymerase II and the general transcription factors. This is Mediator of RNA polymerase II transcription subunit 1 (med1) from Schizosaccharomyces pombe (strain 972 / ATCC 24843) (Fission yeast).